The following is a 163-amino-acid chain: Epithelial membrane protein 3 (163 aa).

A helical membrane pass occupies residues 4 to 24 (LLLVVSALHILILVLLFVATL). N-linked (GlcNAc...) asparagine glycans are attached at residues Asn-46 and Asn-56. 3 helical membrane-spanning segments follow: residues 66-86 (VQAL…LFMF), 100-120 (TGLC…IYAI), and 139-159 (FALA…YIHL).

Belongs to the PMP-22/EMP/MP20 family.

It localises to the membrane. Its function is as follows. Probably involved in cell proliferation and cell-cell interactions. This Mus musculus (Mouse) protein is Epithelial membrane protein 3 (Emp3).